Here is a 145-residue protein sequence, read N- to C-terminus: Basic phospholipase A2 textilotoxin A chain (145 aa).

The N-terminal stretch at 1–19 (MHPAHLLVLLGVCVSLLGA) is a signal peptide. Positions 20-27 (SDIPPLPL) are excised as a propeptide. 7 disulfides stabilise this stretch: cysteine 38/cysteine 98, cysteine 54/cysteine 144, cysteine 56/cysteine 72, cysteine 71/cysteine 125, cysteine 78/cysteine 118, cysteine 87/cysteine 111, and cysteine 105/cysteine 116. The Ca(2+) site is built by tyrosine 55, glycine 57, and glycine 59. The active site involves histidine 75. Aspartate 76 contributes to the Ca(2+) binding site. Residue aspartate 119 is part of the active site.

It belongs to the phospholipase A2 family. Group I subfamily. D49 sub-subfamily. In terms of assembly, heterohexamer. 2 forms exist: 2 A or 2 B chains, 2 C chains and 2 covalently-linked D chains, and 1 A or 1 B, 1 C, 2 covalently-linked D chains and 2 differentially glycosylated covalently-linked D chains. Textilotoxin was originally described as pentameric. The cofactor is Ca(2+). Expressed by the venom gland.

Its subcellular location is the secreted. The enzyme catalyses a 1,2-diacyl-sn-glycero-3-phosphocholine + H2O = a 1-acyl-sn-glycero-3-phosphocholine + a fatty acid + H(+). Functionally, snake venom oligomeric phospholipase A2 that has potent presynaptic neurotoxicity. Chain A possesses a very low toxicity, but is essential for neurotoxicity. Possesses a low enzymatic activity. PLA2 catalyzes the calcium-dependent hydrolysis of the 2-acyl groups in 3-sn-phosphoglycerides. This Pseudonaja textilis (Eastern brown snake) protein is Basic phospholipase A2 textilotoxin A chain.